The sequence spans 309 residues: tRNA dimethylallyltransferase 1 (309 aa).

Residue glycine 14–serine 21 participates in ATP binding. Threonine 16–serine 21 contributes to the substrate binding site. Residues aspartate 39–glutamine 42 form an interaction with substrate tRNA region.

This sequence belongs to the IPP transferase family. In terms of assembly, monomer. Mg(2+) serves as cofactor.

The catalysed reaction is adenosine(37) in tRNA + dimethylallyl diphosphate = N(6)-dimethylallyladenosine(37) in tRNA + diphosphate. Catalyzes the transfer of a dimethylallyl group onto the adenine at position 37 in tRNAs that read codons beginning with uridine, leading to the formation of N6-(dimethylallyl)adenosine (i(6)A). This chain is tRNA dimethylallyltransferase 1, found in Pelobacter propionicus (strain DSM 2379 / NBRC 103807 / OttBd1).